A 180-amino-acid polypeptide reads, in one-letter code: Translation initiation factor IF-3 (180 aa).

It belongs to the IF-3 family. Monomer.

It localises to the cytoplasm. IF-3 binds to the 30S ribosomal subunit and shifts the equilibrium between 70S ribosomes and their 50S and 30S subunits in favor of the free subunits, thus enhancing the availability of 30S subunits on which protein synthesis initiation begins. This chain is Translation initiation factor IF-3, found in Shewanella baltica (strain OS223).